A 90-amino-acid chain; its full sequence is MSGTVAAPEGITDPPIDELLTAADSKYALVIYAAKRARQINAYYAQLNEGLLEYVGPLVETRNQEKPLSIAMREINKGLLTVEATESTED.

Belongs to the RNA polymerase subunit omega family. In terms of assembly, the RNAP catalytic core consists of 2 alpha, 1 beta, 1 beta' and 1 omega subunit. When a sigma factor is associated with the core the holoenzyme is formed, which can initiate transcription.

The catalysed reaction is RNA(n) + a ribonucleoside 5'-triphosphate = RNA(n+1) + diphosphate. In terms of biological role, promotes RNA polymerase assembly. Latches the N- and C-terminal regions of the beta' subunit thereby facilitating its interaction with the beta and alpha subunits. This is DNA-directed RNA polymerase subunit omega from Beutenbergia cavernae (strain ATCC BAA-8 / DSM 12333 / CCUG 43141 / JCM 11478 / NBRC 16432 / NCIMB 13614 / HKI 0122).